A 213-amino-acid chain; its full sequence is Putative 3-methyladenine DNA glycosylase (213 aa).

The protein belongs to the DNA glycosylase MPG family.

The sequence is that of Putative 3-methyladenine DNA glycosylase from Leifsonia xyli subsp. xyli (strain CTCB07).